The following is a 397-amino-acid chain: Putative nickel insertion protein (397 aa).

It belongs to the LarC family.

This chain is Putative nickel insertion protein, found in Synechococcus sp. (strain JA-2-3B'a(2-13)) (Cyanobacteria bacterium Yellowstone B-Prime).